Reading from the N-terminus, the 502-residue chain is Probable cytosol aminopeptidase (502 aa).

2 residues coordinate Mn(2+): lysine 269 and aspartate 274. Residue lysine 281 is part of the active site. Residues aspartate 292, aspartate 351, and glutamate 353 each contribute to the Mn(2+) site. Arginine 355 is a catalytic residue.

Belongs to the peptidase M17 family. Requires Mn(2+) as cofactor.

Its subcellular location is the cytoplasm. It catalyses the reaction Release of an N-terminal amino acid, Xaa-|-Yaa-, in which Xaa is preferably Leu, but may be other amino acids including Pro although not Arg or Lys, and Yaa may be Pro. Amino acid amides and methyl esters are also readily hydrolyzed, but rates on arylamides are exceedingly low.. The enzyme catalyses Release of an N-terminal amino acid, preferentially leucine, but not glutamic or aspartic acids.. Functionally, presumably involved in the processing and regular turnover of intracellular proteins. Catalyzes the removal of unsubstituted N-terminal amino acids from various peptides. The polypeptide is Probable cytosol aminopeptidase (Photobacterium profundum (strain SS9)).